The sequence spans 228 residues: Putative N-acetylmannosamine-6-phosphate 2-epimerase (228 aa).

The protein belongs to the NanE family.

The catalysed reaction is an N-acyl-D-glucosamine 6-phosphate = an N-acyl-D-mannosamine 6-phosphate. It participates in amino-sugar metabolism; N-acetylneuraminate degradation; D-fructose 6-phosphate from N-acetylneuraminate: step 3/5. In terms of biological role, converts N-acetylmannosamine-6-phosphate (ManNAc-6-P) to N-acetylglucosamine-6-phosphate (GlcNAc-6-P). This is Putative N-acetylmannosamine-6-phosphate 2-epimerase from Lactiplantibacillus plantarum (strain ATCC BAA-793 / NCIMB 8826 / WCFS1) (Lactobacillus plantarum).